The chain runs to 128 residues: Sulfurtransferase TusD (128 aa).

The active-site Cysteine persulfide intermediate is C78.

Belongs to the DsrE/TusD family. Heterohexamer, formed by a dimer of trimers. The hexameric TusBCD complex contains 2 copies each of TusB, TusC and TusD. The TusBCD complex interacts with TusE.

The protein localises to the cytoplasm. Its function is as follows. Part of a sulfur-relay system required for 2-thiolation of 5-methylaminomethyl-2-thiouridine (mnm(5)s(2)U) at tRNA wobble positions. Accepts sulfur from TusA and transfers it in turn to TusE. The sequence is that of Sulfurtransferase TusD from Escherichia coli (strain K12 / MC4100 / BW2952).